Here is a 460-residue protein sequence, read N- to C-terminus: Nuclear distribution protein PAC1-1 (460 aa).

The LisH domain occupies 9 to 41 (QADELHRALIAYLTAANLPNTAAALREELNLGE). A coiled-coil region spans residues 74 to 96 (LVTQIMDLESRNHILQSELDNAT). Residues 90 to 100 (SELDNATPTSR) show a composition bias toward polar residues. Residues 90–115 (SELDNATPTSRQNKDPVAWLPRAPPR) form a disordered region. 8 WD repeats span residues 120–161 (SHRD…RTIK), 163–203 (HTKA…KNIR), 207–247 (GHDH…CVKT), 250–289 (GHAE…PEPR), 294–354 (GHEH…KTLA), 355–394 (GHDN…KCVK), 399–439 (AHGH…VTPD), and 441–460 (QIRC…IFAN).

This sequence belongs to the WD repeat LIS1/nudF family. As to quaternary structure, self-associates. Interacts with NDL1 and dynein.

The protein localises to the cytoplasm. The protein resides in the cytoskeleton. It localises to the spindle pole. In terms of biological role, positively regulates the activity of the minus-end directed microtubule motor protein dynein. May enhance dynein-mediated microtubule sliding by targeting dynein to the microtubule plus end. Required for nuclear migration during vegetative growth as well as development. Required for retrograde early endosome (EE) transport from the hyphal tip. Required for localization of dynein to the mitotic spindle poles. Recruits additional proteins to the dynein complex at SPBs. The polypeptide is Nuclear distribution protein PAC1-1 (Sordaria macrospora (strain ATCC MYA-333 / DSM 997 / K(L3346) / K-hell)).